Here is a 129-residue protein sequence, read N- to C-terminus: Protein RfbJ (129 aa).

This sequence belongs to the glycosyltransferase 2 family.

It functions in the pathway bacterial outer membrane biogenesis; lipopolysaccharide biosynthesis. In Shigella flexneri, this protein is Protein RfbJ (rfbJ).